The primary structure comprises 1456 residues: MLTPVRCRTVPNATVATAARVLRRANLFSRYPRQLGHLRWDSTIAQVLERKGLGVPSTARHNEIGVQQLSEHLYKQLFPRGNTDPPAPELIELAKDHLARHDLLGKTTDKTPPIAFQLPALVGDTLDEHFHKLGVDAAEPFLTHAKQFADAHLPPKPTSWVRRSGWTKYNRDGTTENDVLPQGNMMCFDVEVMYKDNPYAVMACAGTPDAWYAWLSPWLLGETENKAQLVPMGDPTVDRIIVGHNIGYDRAKILEEYDLKQTRNFFLDTMSLHVAVNGMCSQQRPTWMKHKKARELREKAEHESASVELQEVLQGGSLTAEEADLWVDKSSINSLRDVAQFHLNVKIDKDIRDVFAETDRNVILNQLDDLLTYCAADVQVTHQVYQVVFPNFLGVCPHPVSFAALRHLASVILPVNKTWDTYIETAEATYLQMLHGVQERLFTLMERTLDYKADPEKYLSDPWLSQLDWSGQEIKMAKPKKKGDVERPALNQKLPGYPQWYKDLFVKVPKELSGLDEPDKEQENRKARHEFINLTVRSRIAPLLLKLSWEGYPLFWSDQFGWTFQVPREKAETFIQRQMTPVQFEDPDVDDRLRMDVDHKYFKLPHKDGPNARCVNPMAKGYLPYFEKGILSSEYPYAKEALEMNASCSYWISARERIKNQMVVYEDQLPPSQRFVNKDADSNTPIGGFVLPQVIPMGTITRRAVERTWLTASNAKKNRVGSELKAMVRAPPGYVFVGADVDSEELWIASVVGDATFKLHGGNAIGFMTLEGTKSQGTDLHSRTASILGITRNDAKVFNYGRIYGAGLKFASQLLRQFNPSLTEAETTAIATKLYDATKGAKTNRKSLYKRPFWRGGTESFVFNMLEEFAEQERPRTPVLGAGITEALMSRWVSKGGFLTSRINWAIQSSGVDYLHLLIIAMDYLTRRFNLACRLAITVHDEIRYLAEEPDKYRVAMALQIANLWTRVMFAQQVGIQDLPQSCAFFSAVDIDHVLRKEVDMDCITPSNPIPIAHGESIDIFQILEKGDDAKLDDSIVPQSQYAPRLENIPYTPRVPVMQRLRERAEAGDHQAFLRFIRAQITNSDEELKRIIAETRYSDPYGAFSLASNGRVSGNPHQRHAAVHASTKTAAAPSKPSIASRFDSVSQASRIKSVAAGSDEPTIRATKAQGKAMAKASGTKLAASTKDTVLNVTIKKKVAAPEMAAVPSTSSESKSKASATTSTTTTENATASPSSSSNVDAKKTTSKTKPTHKKETEGEPFPSLDDPVIAARLEAVSKTSPGTRASVAAKLDALASFSMRAAAAAEAAVTTTTTPEPPTNPPPVAPKAKEPTTTMAEKVLKPTAVPKNPTPTLTPTTKKSNPTSTPTTPKPVGRPRTTPILPYTAPKKKLPSSAFSKEQKEPMSVSEAVWTASVGGRATTTTATATATGDEKKKTTTTPSWKPVKESLFGRGVYIP.

A mitochondrion-targeting transit peptide spans 1-41 (MLTPVRCRTVPNATVATAARVLRRANLFSRYPRQLGHLRWD). 2 disordered regions span residues 1200 to 1266 (APEM…SLDD) and 1308 to 1443 (AVTT…SWKP). The span at 1204 to 1239 (AAVPSTSSESKSKASATTSTTTTENATASPSSSSNV) shows a compositional bias: low complexity. The segment covering 1315-1325 (PEPPTNPPPVA) has biased composition (pro residues). 2 stretches are compositionally biased toward low complexity: residues 1346–1371 (PKNP…TPKP) and 1411–1428 (TASV…ATAT).

This sequence belongs to the DNA polymerase type-A family. The cofactor is Mg(2+).

It is found in the mitochondrion. The enzyme catalyses DNA(n) + a 2'-deoxyribonucleoside 5'-triphosphate = DNA(n+1) + diphosphate. In terms of biological role, involved in the replication of mitochondrial DNA. The sequence is that of DNA polymerase gamma, mitochondrial (mip-1) from Neurospora crassa (strain ATCC 24698 / 74-OR23-1A / CBS 708.71 / DSM 1257 / FGSC 987).